Reading from the N-terminus, the 278-residue chain is Probable endonuclease LCL3 (278 aa).

The chain crosses the membrane as a helical span at residues 15–37 (FSSDVVLLSLLISGSTLGAIAGY). The TNase-like domain occupies 58-263 (RWMYGKVTAV…KAKKRGLWRQ (206 aa)). Arg-154 is an active-site residue. Asp-159 serves as a coordination point for Ca(2+). Catalysis depends on residues Glu-162 and Arg-202.

It belongs to the LCL3 family.

It localises to the mitochondrion. It is found in the membrane. This Vanderwaltozyma polyspora (strain ATCC 22028 / DSM 70294 / BCRC 21397 / CBS 2163 / NBRC 10782 / NRRL Y-8283 / UCD 57-17) (Kluyveromyces polysporus) protein is Probable endonuclease LCL3 (LCL3).